The following is a 210-amino-acid chain: N-(5'-phosphoribosyl)anthranilate isomerase (210 aa).

It belongs to the TrpF family.

The enzyme catalyses N-(5-phospho-beta-D-ribosyl)anthranilate = 1-(2-carboxyphenylamino)-1-deoxy-D-ribulose 5-phosphate. Its pathway is amino-acid biosynthesis; L-tryptophan biosynthesis; L-tryptophan from chorismate: step 3/5. The polypeptide is N-(5'-phosphoribosyl)anthranilate isomerase (TRP1) (Eremothecium gossypii (strain ATCC 10895 / CBS 109.51 / FGSC 9923 / NRRL Y-1056) (Yeast)).